Reading from the N-terminus, the 340-residue chain is Glyceraldehyde-3-phosphate dehydrogenase, cytosolic (340 aa).

NAD(+)-binding positions include 16–17 (RI), Asp-38, and Arg-85. D-glyceraldehyde 3-phosphate contacts are provided by residues 156-158 (SCT), Thr-187, 216-217 (TG), and Arg-239. The Nucleophile role is filled by Cys-157. Asn-321 serves as a coordination point for NAD(+).

This sequence belongs to the glyceraldehyde-3-phosphate dehydrogenase family. Homotetramer.

The protein resides in the cytoplasm. The catalysed reaction is D-glyceraldehyde 3-phosphate + phosphate + NAD(+) = (2R)-3-phospho-glyceroyl phosphate + NADH + H(+). It functions in the pathway carbohydrate degradation; glycolysis; pyruvate from D-glyceraldehyde 3-phosphate: step 1/5. Key enzyme in glycolysis that catalyzes the first step of the pathway by converting D-glyceraldehyde 3-phosphate (G3P) into 3-phospho-D-glyceroyl phosphate. Essential for the maintenance of cellular ATP levels and carbohydrate metabolism. This chain is Glyceraldehyde-3-phosphate dehydrogenase, cytosolic, found in Taxus baccata (English yew).